We begin with the raw amino-acid sequence, 380 residues long: Guanine nucleotide-binding protein alpha-1 subunit (380 aa).

Residues 1–25 (MGSSCSRSHSLSEAETTKNAKSADI) are disordered. Gly-2 is lipidated: N-myristoyl glycine. A lipid anchor (S-palmitoyl cysteine) is attached at Cys-5. The segment covering 10–25 (SLSEAETTKNAKSADI) has biased composition (basic and acidic residues). One can recognise a G-alpha domain in the interval 38–380 (HIHKLLLLGA…ESMRRSREGT (343 aa)). Positions 41–54 (KLLLLGAGESGKST) are G1 motif. Glu-49, Ser-50, Gly-51, Lys-52, Ser-53, Thr-54, Asp-163, Leu-188, Tyr-189, Thr-194, Gly-222, Asn-288, Lys-289, Asp-291, and Ala-356 together coordinate GTP. Mg(2+) is bound at residue Ser-53. The interval 186 to 194 (DVLYARVRT) is G2 motif. Thr-194 provides a ligand contact to Mg(2+). The tract at residues 215–224 (YRLYDVGGQR) is G3 motif. The segment at 284–291 (ILFLNKFD) is G4 motif. The interval 354–359 (TTALDQ) is G5 motif.

This sequence belongs to the G-alpha family. As to quaternary structure, g proteins are composed of 3 units; alpha, beta and gamma. The alpha chain contains the guanine nucleotide binding site. Interacts with COLD1. Mg(2+) is required as a cofactor.

The protein localises to the cell membrane. In terms of biological role, guanine nucleotide-binding proteins (G proteins) are involved as modulators or transducers in various transmembrane signaling systems. May function in a signal transduction pathway required for normal growth and development of internodes, leaves, panicles and seeds. Involved in gibberellin signal transduction. Involved in R gene-mediated disease resistance. Functions upstream of the small GTPase RAC1 in the early steps of signaling. Involved in brassinosteroid response. May not be a signaling molecule in BRI1-mediated perception or transduction. The polypeptide is Guanine nucleotide-binding protein alpha-1 subunit (GPA1) (Oryza sativa subsp. indica (Rice)).